A 212-amino-acid chain; its full sequence is MAIGLIGRKVGMTRIFTEDGVSIPVTVIEVAGNRVTQVKTLETDGYRALQVTTGTKKANRITKPEAGHFAKSGVEAGRGLWEVRLEDGEGEGIEVGAELNVDIFADVAKVDVTGQSKGKGFQGGVKRWNFRTQDMTHGNSLSHRSNGSIGQNQTPGRVFKGKKMSGHMGAERVTTQNLVVVRVDVERNLLLVRGAVPGATNGDLIIKPAVKA.

The span at 136–155 (THGNSLSHRSNGSIGQNQTP) shows a compositional bias: polar residues. The segment at 136 to 157 (THGNSLSHRSNGSIGQNQTPGR) is disordered. At Gln153 the chain carries N5-methylglutamine.

It belongs to the universal ribosomal protein uL3 family. In terms of assembly, part of the 50S ribosomal subunit. Forms a cluster with proteins L14 and L19. In terms of processing, methylated by PrmB.

Functionally, one of the primary rRNA binding proteins, it binds directly near the 3'-end of the 23S rRNA, where it nucleates assembly of the 50S subunit. This Shewanella putrefaciens (strain CN-32 / ATCC BAA-453) protein is Large ribosomal subunit protein uL3.